Reading from the N-terminus, the 338-residue chain is Ketol-acid reductoisomerase (NADP(+)) (338 aa).

The 181-residue stretch at 1–181 (MKVFYDKDCD…GGGRAGIIET (181 aa)) folds into the KARI N-terminal Rossmann domain. NADP(+) contacts are provided by residues 24–27 (YGSQ), Arg-47, and Ser-52. His-107 is an active-site residue. Gly-133 is a binding site for NADP(+). One can recognise a KARI C-terminal knotted domain in the interval 182–327 (NFREETETDL…AKLRAMMPWI (146 aa)). 4 residues coordinate Mg(2+): Asp-190, Glu-194, Glu-226, and Glu-230. Residue Ser-251 participates in substrate binding.

It belongs to the ketol-acid reductoisomerase family. Requires Mg(2+) as cofactor.

The catalysed reaction is (2R)-2,3-dihydroxy-3-methylbutanoate + NADP(+) = (2S)-2-acetolactate + NADPH + H(+). It catalyses the reaction (2R,3R)-2,3-dihydroxy-3-methylpentanoate + NADP(+) = (S)-2-ethyl-2-hydroxy-3-oxobutanoate + NADPH + H(+). It participates in amino-acid biosynthesis; L-isoleucine biosynthesis; L-isoleucine from 2-oxobutanoate: step 2/4. It functions in the pathway amino-acid biosynthesis; L-valine biosynthesis; L-valine from pyruvate: step 2/4. Functionally, involved in the biosynthesis of branched-chain amino acids (BCAA). Catalyzes an alkyl-migration followed by a ketol-acid reduction of (S)-2-acetolactate (S2AL) to yield (R)-2,3-dihydroxy-isovalerate. In the isomerase reaction, S2AL is rearranged via a Mg-dependent methyl migration to produce 3-hydroxy-3-methyl-2-ketobutyrate (HMKB). In the reductase reaction, this 2-ketoacid undergoes a metal-dependent reduction by NADPH to yield (R)-2,3-dihydroxy-isovalerate. The sequence is that of Ketol-acid reductoisomerase (NADP(+)) from Janthinobacterium sp. (strain Marseille) (Minibacterium massiliensis).